The sequence spans 689 residues: Shutoff protein (689 aa).

Residues 1–24 form a disordered region; sequence MSEEPVSGTTVEIEEDTHTPPNSP. The interval 226–289 is binding to host EIF4G; that stretch reads VMNNLLVKRA…SVLVTVVLEC (64 aa). One can recognise an RRM domain in the interval 292–410; that stretch reads RLFTSKDMVK…PLYTETSQRL (119 aa). Phosphotyrosine; by host occurs at positions 309 and 627. The interval 625–689 is disordered; it reads GQYLDPHTGE…GEPDVRGTTS (65 aa). The segment covering 645–655 has biased composition (basic and acidic residues); it reads SGHEFQGDGRH. Residues 656–675 show a composition bias toward basic residues; that stretch reads REPKRGRHFRQRGGPRKPPR. The segment covering 678–689 has biased composition (basic and acidic residues); sequence AGGEPDVRGTTS.

The protein belongs to the adenoviridae shutoff protein family. In terms of assembly, monomer. Interacts with hexon protein; this interaction allows chaperoning and trimerization of hexon proteins. Interacts (via N-terminus) with host initiation factor EIF4G (via C-terminus). Interacts (via RRM domain) with viral mRNAs that contain the tripartite leader; this interaction allows ribosome shunting and expression of viral late mRNAs. Might be cleaved by the viral protease. Post-translationally, phosphorylated. Tyrosine phosphorylation enhances preferential binding to tripartite leader mRNAs and allows ribosome shunting. In terms of processing, methylated. Asymmetric dimethylation by host PRMT1 of the Arg/Gly-rich region may regulate shutoff protein binding to hexon and promote the capsid assembly in the nucleus.

The protein resides in the host cytoplasm. Protein that inhibits host translation while promoting late viral translation by ribosome shunting. Blocks host cap-dependent translation by binding to eIF4G, displacing MKNK1 from cap initiation complexes and preventing EIF4E phosphorylation. Binds to the tripartite leader sequence of viral late mRNAs and recruits host eIF4G, PABPC1/poly-A binding protein and 40S ribosomes subunits on viral mRNAs, allowing ribosome shunting and efficient translation of late viral mRNAs even though conventional translation via ribosome scanning from the cap has been shut off in the host cell. During assembly, acts as a chaperone protein that helps hexon proteins assembly into trimers. The polypeptide is Shutoff protein (Canis lupus familiaris (Dog)).